A 577-amino-acid polypeptide reads, in one-letter code: Arginine--tRNA ligase (577 aa).

Positions 122–132 match the 'HIGH' region motif; it reads PNVAKEMHVGH.

This sequence belongs to the class-I aminoacyl-tRNA synthetase family. As to quaternary structure, monomer.

The protein localises to the cytoplasm. The enzyme catalyses tRNA(Arg) + L-arginine + ATP = L-arginyl-tRNA(Arg) + AMP + diphosphate. The protein is Arginine--tRNA ligase of Aliivibrio salmonicida (strain LFI1238) (Vibrio salmonicida (strain LFI1238)).